Consider the following 36-residue polypeptide: Photosystem I reaction center subunit VIII (36 aa).

The chain crosses the membrane as a helical span at residues 5–27 (FLPSILVPLVGLVFPAIAIASLF).

This sequence belongs to the PsaI family.

It is found in the plastid. Its subcellular location is the chloroplast thylakoid membrane. May help in the organization of the PsaL subunit. This chain is Photosystem I reaction center subunit VIII, found in Chaetosphaeridium globosum (Charophycean green alga).